The sequence spans 205 residues: Small ribosomal subunit protein uS3c (205 aa).

The KH type-2 domain maps to 37 to 106; that stretch reads IRQLLRDYVL…TWRISLVEVS (70 aa).

The protein belongs to the universal ribosomal protein uS3 family. In terms of assembly, part of the 30S ribosomal subunit.

Its subcellular location is the plastid. The protein resides in the chloroplast. This is Small ribosomal subunit protein uS3c (rps3) from Cyanidioschyzon merolae (strain NIES-3377 / 10D) (Unicellular red alga).